A 312-amino-acid polypeptide reads, in one-letter code: Ornithine carbamoyltransferase (312 aa).

Residues 60–63 (STRT), Q87, R111, and 138–141 (HPCQ) each bind carbamoyl phosphate. L-ornithine is bound by residues N169, D229, and 233–234 (SM). Carbamoyl phosphate contacts are provided by residues 268–269 (CL) and R296.

Belongs to the aspartate/ornithine carbamoyltransferase superfamily. OTCase family.

It is found in the cytoplasm. It catalyses the reaction carbamoyl phosphate + L-ornithine = L-citrulline + phosphate + H(+). It functions in the pathway amino-acid biosynthesis; L-arginine biosynthesis; L-arginine from L-ornithine and carbamoyl phosphate: step 1/3. In terms of biological role, reversibly catalyzes the transfer of the carbamoyl group from carbamoyl phosphate (CP) to the N(epsilon) atom of ornithine (ORN) to produce L-citrulline. This chain is Ornithine carbamoyltransferase, found in Rhodopseudomonas palustris (strain BisA53).